A 197-amino-acid polypeptide reads, in one-letter code: dTTP/UTP pyrophosphatase (197 aa).

The active-site Proton acceptor is the aspartate 70.

Belongs to the Maf family. YhdE subfamily. A divalent metal cation is required as a cofactor.

Its subcellular location is the cytoplasm. It catalyses the reaction dTTP + H2O = dTMP + diphosphate + H(+). The catalysed reaction is UTP + H2O = UMP + diphosphate + H(+). Its function is as follows. Nucleoside triphosphate pyrophosphatase that hydrolyzes dTTP and UTP. May have a dual role in cell division arrest and in preventing the incorporation of modified nucleotides into cellular nucleic acids. The sequence is that of dTTP/UTP pyrophosphatase from Yersinia pestis bv. Antiqua (strain Antiqua).